The sequence spans 288 residues: Transposase for insertion sequence element IS1106 (288 aa).

This sequence belongs to the transposase 11 family.

Involved in the transposition of the insertion sequence. This Neisseria meningitidis serogroup B protein is Transposase for insertion sequence element IS1106.